A 99-amino-acid chain; its full sequence is Transmembrane protein 14A (99 aa).

The next 3 membrane-spanning stretches (helical) occupy residues 1-21 (MDLIGFGYAALVTFGSIFGYK), 24-44 (GGVPSLIAGLFVGCLAGYGAY), and 79-99 (PAGLVAGLSLMMILRLVLLLL).

The protein belongs to the TMEM14 family. As to expression, expressed at significantly higher levels in ovarian cancer tissues than in normal tissues (at protein level).

It is found in the mitochondrion membrane. The protein resides in the endoplasmic reticulum membrane. Its function is as follows. Inhibits apoptosis via negative regulation of the mitochondrial outer membrane permeabilization involved in apoptotic signaling pathway. The polypeptide is Transmembrane protein 14A (TMEM14A) (Homo sapiens (Human)).